A 625-amino-acid polypeptide reads, in one-letter code: tRNA uridine 5-carboxymethylaminomethyl modification enzyme MnmG (625 aa).

Residues G9 to G14, V121, and S177 contribute to the FAD site. NAD(+) is bound at residue G271–F285. Q368 lines the FAD pocket.

The protein belongs to the MnmG family. As to quaternary structure, homodimer. Heterotetramer of two MnmE and two MnmG subunits. FAD is required as a cofactor.

The protein resides in the cytoplasm. Functionally, NAD-binding protein involved in the addition of a carboxymethylaminomethyl (cmnm) group at the wobble position (U34) of certain tRNAs, forming tRNA-cmnm(5)s(2)U34. This chain is tRNA uridine 5-carboxymethylaminomethyl modification enzyme MnmG, found in Aliarcobacter butzleri (strain RM4018) (Arcobacter butzleri).